The sequence spans 548 residues: Glucose-6-phosphate isomerase (548 aa).

The active-site Proton donor is glutamate 355. Residues histidine 386 and lysine 511 contribute to the active site.

This sequence belongs to the GPI family.

Its subcellular location is the cytoplasm. The catalysed reaction is alpha-D-glucose 6-phosphate = beta-D-fructose 6-phosphate. It participates in carbohydrate biosynthesis; gluconeogenesis. The protein operates within carbohydrate degradation; glycolysis; D-glyceraldehyde 3-phosphate and glycerone phosphate from D-glucose: step 2/4. In terms of biological role, catalyzes the reversible isomerization of glucose-6-phosphate to fructose-6-phosphate. This chain is Glucose-6-phosphate isomerase, found in Wigglesworthia glossinidia brevipalpis.